A 392-amino-acid chain; its full sequence is Chloramphenicol resistance protein (392 aa).

12 helical membrane-spanning segments follow: residues 6-26 (YLLA…AGLV), 42-62 (TLTS…AALA), 71-91 (LLGF…TTSF), 100-120 (VAAL…AALV), 129-149 (LAVL…GGSL), 160-180 (FWAV…AIPA), 205-225 (LLLA…SFTF), 239-259 (LWIS…VTVA), 268-288 (AQVL…LAML), 294-314 (ALLT…STLI), 332-352 (ATAA…TTLG), and 358-378 (LGPL…AFPF).

It belongs to the major facilitator superfamily.

It localises to the cell membrane. In Streptomyces lividans, this protein is Chloramphenicol resistance protein (cmlR).